A 509-amino-acid chain; its full sequence is Probable cytochrome P450 513A1 (509 aa).

The chain crosses the membrane as a helical span at residues 2 to 19 (NYLVGLVLIFTIFYFFLQ). A heme-binding site is contributed by Cys-454.

This sequence belongs to the cytochrome P450 family. Heme is required as a cofactor.

Its subcellular location is the membrane. This chain is Probable cytochrome P450 513A1 (cyp513A1), found in Dictyostelium discoideum (Social amoeba).